The following is a 208-amino-acid chain: MTNWNYQQTNFVTSAPDIRHLPPDTGIEVAFAGRSNAGKSSALNTLTNQRSLARTSKTPGRTQLINLFEVAEGKRLVDLPGYGYAEVPEEVKLKWQKALGEYLEKRQCLKGLVVLMDIRHPLKDLDQQMIHWAVASEIPVLVLLTKSDKLASGARKAQLKMVREAALAFNGDVQIETFSSLKKQGVDVLRQKLDSWYNGLEPAVEAEE.

One can recognise an EngB-type G domain in the interval 25–199 (TGIEVAFAGR…RQKLDSWYNG (175 aa)). Residues 33 to 40 (GRSNAGKS), 60 to 64 (GRTQL), 78 to 81 (DLPG), 145 to 148 (TKSD), and 178 to 180 (FSS) contribute to the GTP site. Positions 40 and 62 each coordinate Mg(2+).

This sequence belongs to the TRAFAC class TrmE-Era-EngA-EngB-Septin-like GTPase superfamily. EngB GTPase family. The cofactor is Mg(2+).

Necessary for normal cell division and for the maintenance of normal septation. The chain is Probable GTP-binding protein EngB from Enterobacter sp. (strain 638).